The sequence spans 119 residues: Large ribosomal subunit protein uL22 (119 aa).

The protein belongs to the universal ribosomal protein uL22 family. As to quaternary structure, part of the 50S ribosomal subunit.

Functionally, this protein binds specifically to 23S rRNA; its binding is stimulated by other ribosomal proteins, e.g. L4, L17, and L20. It is important during the early stages of 50S assembly. It makes multiple contacts with different domains of the 23S rRNA in the assembled 50S subunit and ribosome. Its function is as follows. The globular domain of the protein is located near the polypeptide exit tunnel on the outside of the subunit, while an extended beta-hairpin is found that lines the wall of the exit tunnel in the center of the 70S ribosome. The chain is Large ribosomal subunit protein uL22 from Rickettsia bellii (strain OSU 85-389).